A 104-amino-acid polypeptide reads, in one-letter code: Flagellar hook-basal body complex protein FliE (104 aa).

This sequence belongs to the FliE family.

The protein localises to the bacterial flagellum basal body. The protein is Flagellar hook-basal body complex protein FliE of Edwardsiella ictaluri (strain 93-146).